The primary structure comprises 342 residues: Autoinducer 2 import system permease protein LsrC (342 aa).

Residues 1–13 (MLKFIQNNREITA) are Periplasmic-facing. The chain crosses the membrane as a helical span at residues 14–34 (LLAVVLLFVLPGFLDRQYLSV). Topologically, residues 35–38 (QTLT) are cytoplasmic. A helical transmembrane segment spans residues 39–59 (MVYSSAQILILLAMGATLVML). At 60–69 (TRNIDVSVGS) the chain is on the periplasmic side. Residues 70–90 (ITGMCAVLLGMLLNAGYSLPV) form a helical membrane-spanning segment. Over 91–92 (AC) the chain is Cytoplasmic. Residues 93–113 (VATLLLGLLAGFFNGALVAWL) form a helical membrane-spanning segment. Lys114 is a topological domain (periplasmic). Residues 115-135 (IPAIVATLGTLGLYRGIMLLW) form a helical membrane-spanning segment. At 136–154 (TGGKWIEGLPAELKQLSAP) the chain is on the cytoplasmic side. The helical transmembrane segment at 155-175 (LLLGISAIGWLTIILVAFMAW) threads the bilayer. The Periplasmic segment spans residues 176–212 (LLAKTAFGRSFYATGDNLQGARQLGVRTEAIRIVAFS). The chain crosses the membrane as a helical span at residues 213–233 (LNGCMAALAGIVFASQIGFIL). The Cytoplasmic portion of the chain corresponds to 234-251 (NQTGTGLEMKAIAACVLG). Residues 252–272 (GISLLGGSGAIIGAVLGAWFL) traverse the membrane as a helical segment. Topologically, residues 273 to 283 (TQIDSVLVLLR) are periplasmic. Residues 284 to 304 (IPAWWNDFIAGLVLLAVLVFD) form a helical membrane-spanning segment. Residues 305 to 342 (GRLRCALERNLRRQKYARFMTPPPSVKPASSGKKREAA) are Cytoplasmic-facing.

It belongs to the binding-protein-dependent transport system permease family. AraH/RbsC subfamily. In terms of assembly, the complex is composed of two ATP-binding proteins (LsrA), two transmembrane proteins (LsrC and LsrD) and a solute-binding protein (LsrB).

It is found in the cell inner membrane. Functionally, part of the ABC transporter complex LsrABCD involved in autoinducer 2 (AI-2) import. Probably responsible for the translocation of the substrate across the membrane. This chain is Autoinducer 2 import system permease protein LsrC (lsrC), found in Shigella flexneri.